Reading from the N-terminus, the 422-residue chain is Enolase (422 aa).

Gln-162 serves as a coordination point for (2R)-2-phosphoglycerate. Glu-204 serves as the catalytic Proton donor. Asp-241, Glu-285, and Asp-312 together coordinate Mg(2+). (2R)-2-phosphoglycerate-binding residues include Lys-337, Arg-366, Ser-367, and Lys-388. Lys-337 serves as the catalytic Proton acceptor.

Belongs to the enolase family. Mg(2+) serves as cofactor.

It localises to the cytoplasm. The protein localises to the secreted. Its subcellular location is the cell surface. The enzyme catalyses (2R)-2-phosphoglycerate = phosphoenolpyruvate + H2O. It functions in the pathway carbohydrate degradation; glycolysis; pyruvate from D-glyceraldehyde 3-phosphate: step 4/5. Its function is as follows. Catalyzes the reversible conversion of 2-phosphoglycerate (2-PG) into phosphoenolpyruvate (PEP). It is essential for the degradation of carbohydrates via glycolysis. In Streptococcus thermophilus, this protein is Enolase.